Here is a 98-residue protein sequence, read N- to C-terminus: NADH-ubiquinone oxidoreductase chain 4L (98 aa).

3 helical membrane passes run 2 to 22, 30 to 50, and 61 to 81; these read PFIY…LLLF, LLCL…TTLG, and IILM…LVTI.

This sequence belongs to the complex I subunit 4L family. In terms of assembly, core subunit of respiratory chain NADH dehydrogenase (Complex I) which is composed of 45 different subunits.

Its subcellular location is the mitochondrion inner membrane. It carries out the reaction a ubiquinone + NADH + 5 H(+)(in) = a ubiquinol + NAD(+) + 4 H(+)(out). Its function is as follows. Core subunit of the mitochondrial membrane respiratory chain NADH dehydrogenase (Complex I) which catalyzes electron transfer from NADH through the respiratory chain, using ubiquinone as an electron acceptor. Part of the enzyme membrane arm which is embedded in the lipid bilayer and involved in proton translocation. The chain is NADH-ubiquinone oxidoreductase chain 4L (MT-ND4L) from Bradypus tridactylus (Pale-throated three-toed sloth).